Reading from the N-terminus, the 403-residue chain is O-succinylhomoserine sulfhydrylase (403 aa).

Lys219 carries the N6-(pyridoxal phosphate)lysine modification.

This sequence belongs to the trans-sulfuration enzymes family. MetZ subfamily. As to quaternary structure, homotetramer. The cofactor is pyridoxal 5'-phosphate.

It catalyses the reaction O-succinyl-L-homoserine + hydrogen sulfide = L-homocysteine + succinate. The protein operates within amino-acid biosynthesis; L-methionine biosynthesis via de novo pathway; L-homocysteine from O-succinyl-L-homoserine: step 1/1. Functionally, catalyzes the formation of L-homocysteine from O-succinyl-L-homoserine (OSHS) and hydrogen sulfide. Cannot use the other activated form of L-homoserine, O-acetyl-L-homoserine, as a substrate. The polypeptide is O-succinylhomoserine sulfhydrylase (Pseudomonas aeruginosa (strain ATCC 15692 / DSM 22644 / CIP 104116 / JCM 14847 / LMG 12228 / 1C / PRS 101 / PAO1)).